A 252-amino-acid chain; its full sequence is MAATSLVGICRRASAFLKAACSLVNPKDAAHSGCRSSLSLLHKNTPHVTSFLQCKLLHTTLSRKGLEEFFDDPKNWGEEKVKSGASWTCQQLRNKSNEDLHKLWYVLLKERNMLLTLEQEAKRQRLPMPSPERLEKVVDSMDNVDKVVQEREDALRLLQTGQEKPRPGAWRRDIFGRIVWHKFKQWPIPWYLNKRYNRRRFFAMPYVDRFIRLRIEKHARIEARKRSLQKKKEKILHAKFPHLSQERKSSSV.

N6-acetyllysine is present on Lys-146. A compositionally biased stretch (basic residues) spans 230-240 (KKKEKILHAKF). A disordered region spans residues 230–252 (KKKEKILHAKFPHLSQERKSSSV).

The protein belongs to the universal ribosomal protein uL29 family. In terms of assembly, component of the mitochondrial ribosome large subunit (39S) which comprises a 16S rRNA and about 50 distinct proteins.

It is found in the mitochondrion. The sequence is that of Large ribosomal subunit protein uL29m (Mrpl47) from Mus musculus (Mouse).